The sequence spans 569 residues: MEQLRPFFLLLAIFVASLVNAEVHFHEFVIQETPVKRLCRVHNSITVNGQFPGPTLEVRNGDSLVITAINKARYNISLHWHGIRQMRNPWADGPEYITQCPIQPGGSYTYRFTMEDQEGTLWWHAHSRWLRATVYGALIIRPPLSSPHYPFPVIPKREITLLLGEWWDRNPMDVLNLAQFTGAAPNISDAFTINGQPGDLYRCSSQETLRFLVGSGEIVLLRVINSALNQELFFGVANHKLTVVAADASYTKPFSTNVIMLGPGQTTDVLLTADQPPAHYYMAAHAYNSANAAFDNTTTTAILKYKDASCVTLQAKSQARAIPAQLPGFNDTATAAAFTAQMKSPSKVKVPLEIDENLFFTVGLGLFNCPTPNTQRCQGPNGTRFTASINNVSFVFPKQNSIMQAYYQGTPTGVFTTDFPPTPPVTFDYTGNVSRGLWQPTRGTKAYKLKFNSQVQIILQDTSIVTTENHPMHLHGYEFYVVGTGVGNFNPNTDTSSFNLIDPPRRNTIGTPPGGWVAIRFVANNPGAWLMHCHIDSHIFWGLAMVFLVENGEGHLQSVQSPPLDLPQC.

The N-terminal stretch at 1-21 (MEQLRPFFLLLAIFVASLVNA) is a signal peptide. Plastocyanin-like domains are found at residues 29–145 (VIQE…PPLS) and 157–308 (REIT…YKDA). An N-linked (GlcNAc...) asparagine glycan is attached at asparagine 75. Cu cation-binding residues include histidine 79, histidine 81, histidine 124, and histidine 126. Residues asparagine 186, asparagine 296, asparagine 330, asparagine 381, asparagine 391, and asparagine 432 are each glycosylated (N-linked (GlcNAc...) asparagine). The Plastocyanin-like 3 domain maps to 418–553 (DFPPTPPVTF…AMVFLVENGE (136 aa)). 7 residues coordinate Cu cation: histidine 470, histidine 473, histidine 475, histidine 532, cysteine 533, histidine 534, and histidine 538.

It belongs to the multicopper oxidase family. Cu cation serves as cofactor. As to expression, mostly expressed in roots. Also detected in leaves, stems and flowers but not in siliques.

The protein resides in the secreted. It localises to the extracellular space. Its subcellular location is the apoplast. It catalyses the reaction 4 hydroquinone + O2 = 4 benzosemiquinone + 2 H2O. In terms of biological role, lignin degradation and detoxification of lignin-derived products. The protein is Laccase-13 (LAC13) of Arabidopsis thaliana (Mouse-ear cress).